A 95-amino-acid polypeptide reads, in one-letter code: Large ribosomal subunit protein bL25 (95 aa).

The protein belongs to the bacterial ribosomal protein bL25 family. As to quaternary structure, part of the 50S ribosomal subunit; part of the 5S rRNA/L5/L18/L25 subcomplex. Contacts the 5S rRNA. Binds to the 5S rRNA independently of L5 and L18.

This is one of the proteins that binds to the 5S RNA in the ribosome where it forms part of the central protuberance. This chain is Large ribosomal subunit protein bL25, found in Shewanella sp. (strain ANA-3).